The primary structure comprises 417 residues: Serine hydroxymethyltransferase 1 (417 aa).

(6S)-5,6,7,8-tetrahydrofolate-binding positions include leucine 121 and 125–127; that span reads GHL. An N6-(pyridoxal phosphate)lysine modification is found at lysine 230. 355–357 lines the (6S)-5,6,7,8-tetrahydrofolate pocket; that stretch reads SPF.

This sequence belongs to the SHMT family. In terms of assembly, homodimer. It depends on pyridoxal 5'-phosphate as a cofactor.

Its subcellular location is the cytoplasm. The catalysed reaction is (6R)-5,10-methylene-5,6,7,8-tetrahydrofolate + glycine + H2O = (6S)-5,6,7,8-tetrahydrofolate + L-serine. It functions in the pathway one-carbon metabolism; tetrahydrofolate interconversion. The protein operates within amino-acid biosynthesis; glycine biosynthesis; glycine from L-serine: step 1/1. Catalyzes the reversible interconversion of serine and glycine with tetrahydrofolate (THF) serving as the one-carbon carrier. This reaction serves as the major source of one-carbon groups required for the biosynthesis of purines, thymidylate, methionine, and other important biomolecules. Also exhibits THF-independent aldolase activity toward beta-hydroxyamino acids, producing glycine and aldehydes, via a retro-aldol mechanism. The sequence is that of Serine hydroxymethyltransferase 1 from Pseudomonas putida (strain ATCC 47054 / DSM 6125 / CFBP 8728 / NCIMB 11950 / KT2440).